We begin with the raw amino-acid sequence, 57 residues long: MSRLYAIILIALVFNVIMTIMPDMKVEAVSCEDCPEHCATKDQRAKCDNDRCVCEPK.

The N-terminal stretch at 1–19 is a signal peptide; sequence MSRLYAIILIALVFNVIMT. Positions 20–28 are excised as a propeptide; it reads IMPDMKVEA. Intrachain disulfides connect Cys31–Cys47, Cys34–Cys52, and Cys38–Cys54.

Belongs to the short scorpion toxin superfamily. Potassium channel inhibitor family. Alpha-KTx 08 subfamily. Expressed by the venom gland.

Its subcellular location is the secreted. Inhibits Kv1.1/KCNA1, Kv1.3/KCNA3 and Shaker potassium channels. The sequence is that of Potassium channel toxin MeuTXKalpha2 from Mesobuthus eupeus (Lesser Asian scorpion).